We begin with the raw amino-acid sequence, 86 residues long: Putative protein adenylyltransferase MJ1215 (86 aa).

A GSX(10)DXD motif motif is present at residues 35–49 (GSYARGEQKETSDID). Mg(2+) is bound by residues Asp-47, Asp-49, and Asp-79.

It belongs to the MntA antitoxin family. In terms of assembly, probably forms a complex with cognate toxin MJ1216. Requires Mg(2+) as cofactor.

It catalyses the reaction L-tyrosyl-[protein] + ATP = O-(5'-adenylyl)-L-tyrosyl-[protein] + diphosphate. The catalysed reaction is O-(5'-adenylyl)-L-tyrosyl-[protein] + ATP = O-[5'-(adenylyl-(5'-&gt;3')-adenylyl)]-L-tyrosyl-[protein] + diphosphate. Probable antitoxin component of a putative type VII toxin-antitoxin (TA) system. Neutralizes cognate toxic MJ1216 by di-AMPylation. This is Putative protein adenylyltransferase MJ1215 from Methanocaldococcus jannaschii (strain ATCC 43067 / DSM 2661 / JAL-1 / JCM 10045 / NBRC 100440) (Methanococcus jannaschii).